The chain runs to 1311 residues: Ubiquitin carboxyl-terminal hydrolase 36 (1311 aa).

Composition is skewed to low complexity over residues 120-134 (AAAA…SAGS) and 156-174 (STPT…SSSS). Positions 120–189 (AAAATNNGNS…NPNELPKPKR (70 aa)) are disordered. One can recognise a USP domain in the interval 212-533 (AGMINVGNTC…NSYIMFYELD (322 aa)). The active-site Nucleophile is Cys221. His492 (proton acceptor) is an active-site residue. The tract at residues 546–575 (NGLRQLSNGHHHHQQQQQQHQQQQQQQPTV) is disordered. Positions 560-572 (QQQQQHQQQQQQQ) are enriched in low complexity. Phosphoserine is present on Ser581. 3 disordered regions span residues 587–620 (TRFI…GHSQ), 640–1095 (KFQE…GCLN), and 1136–1311 (DHGD…QQQS). Low complexity-rich tracts occupy residues 605 to 616 (TTTTTATNNTTN), 660 to 716 (APAV…QQQQ), and 759 to 774 (TLTL…STPT). Thr767 carries the post-translational modification Phosphothreonine. Phosphoserine occurs at positions 787 and 789. The segment covering 795-826 (SSGTPSSSTPTTTTTAAAAAASSPMQATAAAT) has biased composition (low complexity). Positions 836-853 (ARKRSLPDHHHHHPHHHV) are enriched in basic residues. The span at 869 to 879 (PATNFNSSSSK) shows a compositional bias: polar residues. Basic and acidic residues predominate over residues 880 to 889 (QKTDAIDEIF). The span at 896-905 (NKKRINNKNQ) shows a compositional bias: basic residues. Residues 910–920 (GDEEEDDEETL) show a composition bias toward acidic residues. 2 stretches are compositionally biased toward low complexity: residues 925–942 (NNSS…PTTN) and 950–979 (VSSS…STSA). Pro residues predominate over residues 980–989 (PPSPKTPPSP). Ser982 bears the Phosphoserine mark. Thr985 is subject to Phosphothreonine. The residue at position 988 (Ser988) is a Phosphoserine. Over residues 1006–1020 (DDDDDEEEEDEDDEE) the composition is skewed to acidic residues. Residues 1037 to 1050 (PFSSQQKPTPSPST) show a composition bias toward low complexity. Ser1047 carries the phosphoserine modification. At Thr1050 the chain carries Phosphothreonine. The segment covering 1060–1081 (FNGTSSSTPHVGNGYQSEPSTP) has biased composition (polar residues). Low complexity-rich tracts occupy residues 1154–1176 (VVTT…TADA) and 1204–1221 (TANG…PGYN). Residues 1246–1255 (QHASSSYRSN) are compositionally biased toward polar residues. Over residues 1267–1276 (GGNGGGGSGG) the composition is skewed to gly residues.

It belongs to the peptidase C19 family. As to quaternary structure, interacts with atms/PAF1, but not with CycT.

The protein resides in the nucleus. It is found in the nucleolus. The catalysed reaction is Thiol-dependent hydrolysis of ester, thioester, amide, peptide and isopeptide bonds formed by the C-terminal Gly of ubiquitin (a 76-residue protein attached to proteins as an intracellular targeting signal).. Its function is as follows. Required for maintaining multiple types of adult stem cells, including male and female germline, epithelial follicle cell and intestinal stem cells. May function as a transcriptional repressor by continually deubiquiting histone H2B at the promoters of genes critical for cellular differentiation, thereby preventing histone H3 'Lys-4' trimethylation (H3K4). Controls selective autophagy activation by ubiquitinated proteins. The chain is Ubiquitin carboxyl-terminal hydrolase 36 (Usp36) from Drosophila willistoni (Fruit fly).